We begin with the raw amino-acid sequence, 133 residues long: Large ribosomal subunit protein bL19 (133 aa).

Residues 114-133 are disordered; the sequence is IAERQMTAASKEEPAEKSEA. Over residues 123–133 the composition is skewed to basic and acidic residues; sequence SKEEPAEKSEA.

The protein belongs to the bacterial ribosomal protein bL19 family.

In terms of biological role, this protein is located at the 30S-50S ribosomal subunit interface and may play a role in the structure and function of the aminoacyl-tRNA binding site. This chain is Large ribosomal subunit protein bL19, found in Phenylobacterium zucineum (strain HLK1).